The chain runs to 162 residues: Crossover junction endodeoxyribonuclease RuvC (162 aa).

Residues aspartate 7, glutamate 67, and aspartate 140 contribute to the active site. Positions 7, 67, and 140 each coordinate Mg(2+).

The protein belongs to the RuvC family. In terms of assembly, homodimer which binds Holliday junction (HJ) DNA. The HJ becomes 2-fold symmetrical on binding to RuvC with unstacked arms; it has a different conformation from HJ DNA in complex with RuvA. In the full resolvosome a probable DNA-RuvA(4)-RuvB(12)-RuvC(2) complex forms which resolves the HJ. It depends on Mg(2+) as a cofactor.

It localises to the cytoplasm. It carries out the reaction Endonucleolytic cleavage at a junction such as a reciprocal single-stranded crossover between two homologous DNA duplexes (Holliday junction).. Functionally, the RuvA-RuvB-RuvC complex processes Holliday junction (HJ) DNA during genetic recombination and DNA repair. Endonuclease that resolves HJ intermediates. Cleaves cruciform DNA by making single-stranded nicks across the HJ at symmetrical positions within the homologous arms, yielding a 5'-phosphate and a 3'-hydroxyl group; requires a central core of homology in the junction. The consensus cleavage sequence is 5'-(A/T)TT(C/G)-3'. Cleavage occurs on the 3'-side of the TT dinucleotide at the point of strand exchange. HJ branch migration catalyzed by RuvA-RuvB allows RuvC to scan DNA until it finds its consensus sequence, where it cleaves and resolves the cruciform DNA. The chain is Crossover junction endodeoxyribonuclease RuvC from Heliobacterium modesticaldum (strain ATCC 51547 / Ice1).